The primary structure comprises 390 residues: MISLPGPLVTNLLRFLFLGLSALAPPSRAELQLHLPANQLQAVEGGEVVLPAWYTLHAEVSSAQPGEVPFVMWFFKDKEKEDQVLSYINGVTTSKPGVSLVYSMPSRNLSLRLEGLQEKDSGPYSCSVNVQDKNGQASGHSIKTLELNVLVPPAPPSCRLQGVPRVGANVTLSCQSPRSKPAVQYQWDRQLPSFQTFFAPVLDVIRGSLSLTNLSSSMAGVYVCKAHNEVGTAQCNVTLEVSTGPGAAVVAGAVVGTLVGLGLLAGLVLLYHRRGKALEEPANDIKEDAIAPRTLPWPKSSDTISKNGTLSSVTSARALRPPHGPPRPGALTPTPSLSSQALPSPRLPTTDGANPQPISLIPGGVSSSGLSRMGAVPVMVPAQSQAGSLV.

Positions 1–29 (MISLPGPLVTNLLRFLFLGLSALAPPSRA) are cleaved as a signal peptide. One can recognise an Ig-like V-type domain in the interval 30 to 143 (ELQLHLPANQ…NGQASGHSIK (114 aa)). Residues 30 to 248 (ELQLHLPANQ…LEVSTGPGAA (219 aa)) are Extracellular-facing. 4 N-linked (GlcNAc...) asparagine glycosylation sites follow: asparagine 108, asparagine 169, asparagine 213, and asparagine 236. The Ig-like C2-type domain maps to 156-242 (PSCRLQGVPR…AQCNVTLEVS (87 aa)). Residues cysteine 174 and cysteine 224 are joined by a disulfide bond. The helical transmembrane segment at 249-269 (VVAGAVVGTLVGLGLLAGLVL) threads the bilayer. Residues 270 to 390 (LYHRRGKALE…PAQSQAGSLV (121 aa)) lie on the Cytoplasmic side of the membrane. Serine 301 is modified (phosphoserine). A disordered region spans residues 316 to 365 (ARALRPPHGPPRPGALTPTPSLSSQALPSPRLPTTDGANPQPISLIPGGV). A phosphothreonine mark is found at threonine 332 and threonine 334. The segment covering 333 to 342 (PTPSLSSQAL) has biased composition (polar residues). Phosphoserine occurs at positions 336, 339, 344, and 371.

In terms of assembly, interacts with MAGI1.

It localises to the cell junction. The protein localises to the adherens junction. Its subcellular location is the tight junction. The protein resides in the cell membrane. Functionally, can mediate aggregation most likely through a homophilic molecular interaction. This chain is Endothelial cell-selective adhesion molecule (ESAM), found in Macaca fascicularis (Crab-eating macaque).